Here is a 184-residue protein sequence, read N- to C-terminus: NADH-quinone oxidoreductase subunit B (184 aa).

Residues C37, C38, C103, and C132 each contribute to the [4Fe-4S] cluster site.

The protein belongs to the complex I 20 kDa subunit family. In terms of assembly, NDH-1 is composed of 14 different subunits. Subunits NuoB, C, D, E, F, and G constitute the peripheral sector of the complex. [4Fe-4S] cluster serves as cofactor.

The protein localises to the cell membrane. The enzyme catalyses a quinone + NADH + 5 H(+)(in) = a quinol + NAD(+) + 4 H(+)(out). In terms of biological role, NDH-1 shuttles electrons from NADH, via FMN and iron-sulfur (Fe-S) centers, to quinones in the respiratory chain. The immediate electron acceptor for the enzyme in this species is believed to be a menaquinone. Couples the redox reaction to proton translocation (for every two electrons transferred, four hydrogen ions are translocated across the cytoplasmic membrane), and thus conserves the redox energy in a proton gradient. This Mycolicibacterium gilvum (strain PYR-GCK) (Mycobacterium gilvum (strain PYR-GCK)) protein is NADH-quinone oxidoreductase subunit B.